The sequence spans 337 residues: Anthranilate phosphoribosyltransferase (337 aa).

Residues glycine 81, 84–85 (GD), serine 89, 91–94 (NVST), 109–117 (KHGNRALSS), and alanine 121 contribute to the 5-phospho-alpha-D-ribose 1-diphosphate site. Position 81 (glycine 81) interacts with anthranilate. Mg(2+) is bound at residue serine 93. Residue asparagine 112 coordinates anthranilate. Arginine 167 is an anthranilate binding site. Mg(2+)-binding residues include aspartate 226 and glutamate 227.

The protein belongs to the anthranilate phosphoribosyltransferase family. As to quaternary structure, homodimer. The cofactor is Mg(2+).

The enzyme catalyses N-(5-phospho-beta-D-ribosyl)anthranilate + diphosphate = 5-phospho-alpha-D-ribose 1-diphosphate + anthranilate. The protein operates within amino-acid biosynthesis; L-tryptophan biosynthesis; L-tryptophan from chorismate: step 2/5. Catalyzes the transfer of the phosphoribosyl group of 5-phosphorylribose-1-pyrophosphate (PRPP) to anthranilate to yield N-(5'-phosphoribosyl)-anthranilate (PRA). The protein is Anthranilate phosphoribosyltransferase of Bradyrhizobium diazoefficiens (strain JCM 10833 / BCRC 13528 / IAM 13628 / NBRC 14792 / USDA 110).